A 225-amino-acid chain; its full sequence is Urease accessory protein UreF (225 aa).

Belongs to the UreF family. In terms of assembly, ureD, UreF and UreG form a complex that acts as a GTP-hydrolysis-dependent molecular chaperone, activating the urease apoprotein by helping to assemble the nickel containing metallocenter of UreC. The UreE protein probably delivers the nickel.

Its subcellular location is the cytoplasm. Functionally, required for maturation of urease via the functional incorporation of the urease nickel metallocenter. The sequence is that of Urease accessory protein UreF from Geobacillus kaustophilus (strain HTA426).